A 190-amino-acid polypeptide reads, in one-letter code: GTP cyclohydrolase 1 (190 aa).

Residues cysteine 75, histidine 78, and cysteine 146 each coordinate Zn(2+).

This sequence belongs to the GTP cyclohydrolase I family. In terms of assembly, toroid-shaped homodecamer, composed of two pentamers of five dimers.

It catalyses the reaction GTP + H2O = 7,8-dihydroneopterin 3'-triphosphate + formate + H(+). The protein operates within cofactor biosynthesis; 7,8-dihydroneopterin triphosphate biosynthesis; 7,8-dihydroneopterin triphosphate from GTP: step 1/1. The chain is GTP cyclohydrolase 1 from Campylobacter jejuni subsp. jejuni serotype O:23/36 (strain 81-176).